The sequence spans 208 residues: Ubiquinone biosynthesis protein COQ4 homolog, mitochondrial (208 aa).

Residues His105, Asp106, His109, and Glu122 each contribute to the Zn(2+) site.

This sequence belongs to the COQ4 family. In terms of assembly, component of a multi-subunit COQ enzyme complex. Zn(2+) serves as cofactor.

It localises to the mitochondrion inner membrane. It carries out the reaction a 4-hydroxy-3-methoxy-5-(all-trans-polyprenyl)benzoate + H(+) = a 2-methoxy-6-(all-trans-polyprenyl)phenol + CO2. The protein operates within cofactor biosynthesis; ubiquinone biosynthesis. Its function is as follows. Lyase that catalyzes the C1-decarboxylation of 4-hydroxy-3-methoxy-5-(all-trans-polyprenyl)benzoic acid into 2-methoxy-6-(all-trans-polyprenyl)phenol during ubiquinone biosynthesis. The sequence is that of Ubiquinone biosynthesis protein COQ4 homolog, mitochondrial from Nematostella vectensis (Starlet sea anemone).